A 456-amino-acid chain; its full sequence is Bifunctional protein GlmU (456 aa).

Residues 1–228 form a pyrophosphorylase region; sequence MPQNTLNIVI…SHLAAGVNNK (228 aa). UDP-N-acetyl-alpha-D-glucosamine is bound by residues 11–14, K25, Q75, 80–81, 102–104, G138, E153, N168, and N226; these read LAAG, GT, and YGD. Residue D104 coordinates Mg(2+). Position 226 (N226) interacts with Mg(2+). The interval 229–249 is linker; sequence LQLAELERIFQTGQAQELLKA. Residues 250 to 456 are N-acetyltransferase; it reads GVTLHDPARF…GWVRPEKDKQ (207 aa). UDP-N-acetyl-alpha-D-glucosamine is bound by residues R332 and K350. The Proton acceptor role is filled by H362. Residues Y365 and N376 each contribute to the UDP-N-acetyl-alpha-D-glucosamine site. Residues A379, 385–386, S404, A422, and R439 contribute to the acetyl-CoA site; that span reads NY.

This sequence in the N-terminal section; belongs to the N-acetylglucosamine-1-phosphate uridyltransferase family. The protein in the C-terminal section; belongs to the transferase hexapeptide repeat family. Homotrimer. Mg(2+) is required as a cofactor.

Its subcellular location is the cytoplasm. The catalysed reaction is alpha-D-glucosamine 1-phosphate + acetyl-CoA = N-acetyl-alpha-D-glucosamine 1-phosphate + CoA + H(+). It carries out the reaction N-acetyl-alpha-D-glucosamine 1-phosphate + UTP + H(+) = UDP-N-acetyl-alpha-D-glucosamine + diphosphate. The protein operates within nucleotide-sugar biosynthesis; UDP-N-acetyl-alpha-D-glucosamine biosynthesis; N-acetyl-alpha-D-glucosamine 1-phosphate from alpha-D-glucosamine 6-phosphate (route II): step 2/2. Its pathway is nucleotide-sugar biosynthesis; UDP-N-acetyl-alpha-D-glucosamine biosynthesis; UDP-N-acetyl-alpha-D-glucosamine from N-acetyl-alpha-D-glucosamine 1-phosphate: step 1/1. It participates in bacterial outer membrane biogenesis; LPS lipid A biosynthesis. Functionally, catalyzes the last two sequential reactions in the de novo biosynthetic pathway for UDP-N-acetylglucosamine (UDP-GlcNAc). The C-terminal domain catalyzes the transfer of acetyl group from acetyl coenzyme A to glucosamine-1-phosphate (GlcN-1-P) to produce N-acetylglucosamine-1-phosphate (GlcNAc-1-P), which is converted into UDP-GlcNAc by the transfer of uridine 5-monophosphate (from uridine 5-triphosphate), a reaction catalyzed by the N-terminal domain. This chain is Bifunctional protein GlmU, found in Neisseria meningitidis serogroup C (strain 053442).